The sequence spans 256 residues: Ribosomal RNA small subunit methyltransferase J (256 aa).

S-adenosyl-L-methionine contacts are provided by residues 101-102, 117-118, 153-154, and aspartate 176; these read RD, ER, and SS.

It belongs to the methyltransferase superfamily. RsmJ family.

It localises to the cytoplasm. The enzyme catalyses guanosine(1516) in 16S rRNA + S-adenosyl-L-methionine = N(2)-methylguanosine(1516) in 16S rRNA + S-adenosyl-L-homocysteine + H(+). Functionally, specifically methylates the guanosine in position 1516 of 16S rRNA. The protein is Ribosomal RNA small subunit methyltransferase J of Photobacterium profundum (strain SS9).